Reading from the N-terminus, the 1228-residue chain is Structural maintenance of chromosomes protein 1 (1228 aa).

An ATP-binding site is contributed by 32-39 (GPNGAGKS). The stretch at 197 to 510 (NKKRGINAEL…ESKQDAKKRE (314 aa)) forms a coiled coil. The SMC hinge domain occupies 522–635 (VKGRIIDLCT…CDSMTVARDL (114 aa)). 3 coiled-coil regions span residues 710-783 (KLHS…KIFS), 814-926 (EFTK…EIDR), and 984-1068 (VEVD…KRLQ).

This sequence belongs to the SMC family. SMC1 subfamily. As to quaternary structure, cohesin complexes are composed of the psm1/smc1 and psm3/smc3 heterodimer attached via their SMC hinge domain, rad21/scc1 which link them, and psc3/scc3, which interacts with rad21.

Its subcellular location is the nucleus. The protein localises to the chromosome. Its function is as follows. Involved in chromosome cohesion during cell cycle and in DNA repair. Central component of cohesin complex. The cohesin complex is required for the cohesion of sister chromatids after DNA replication. The cohesin complex apparently forms a large proteinaceous ring within which sister chromatids can be trapped. At anaphase, the complex is cleaved and dissociates from chromatin, allowing sister chromatids to segregate. The protein is Structural maintenance of chromosomes protein 1 (psm1) of Schizosaccharomyces pombe (strain 972 / ATCC 24843) (Fission yeast).